A 138-amino-acid chain; its full sequence is Large ribosomal subunit protein bL17 (138 aa).

It belongs to the bacterial ribosomal protein bL17 family. Part of the 50S ribosomal subunit. Contacts protein L32.

The sequence is that of Large ribosomal subunit protein bL17 from Granulibacter bethesdensis (strain ATCC BAA-1260 / CGDNIH1).